Here is a 265-residue protein sequence, read N- to C-terminus: Tryptophan 2,3-dioxygenase (265 aa).

Substrate is bound by residues 38-42 (FIVVH) and arginine 104. Histidine 223 is a heme binding site. Threonine 237 is a substrate binding site.

It belongs to the tryptophan 2,3-dioxygenase family. In terms of assembly, homotetramer. The cofactor is heme.

The catalysed reaction is L-tryptophan + O2 = N-formyl-L-kynurenine. The protein operates within amino-acid degradation; L-tryptophan degradation via kynurenine pathway; L-kynurenine from L-tryptophan: step 1/2. Functionally, heme-dependent dioxygenase that catalyzes the oxidative cleavage of the L-tryptophan (L-Trp) pyrrole ring and converts L-tryptophan to N-formyl-L-kynurenine. Catalyzes the oxidative cleavage of the indole moiety. The protein is Tryptophan 2,3-dioxygenase of Anaeromyxobacter dehalogenans (strain 2CP-C).